We begin with the raw amino-acid sequence, 142 residues long: SLSEKNKAAVKALWSKIGKSSDAIGNDALSRMIVVYPQTKTYFSHWPEVTPGSPHIKAHGKKVMGGIALAVTKIDDLKTGLSELSEQHAYKLRVDPANFKTLNHCILVVISTMFPKEFTPEAHVSLDKFLSGVALALADRYR.

The residue at position 1 (Ser-1) is an N-acetylserine. Residues 1-142 enclose the Globin domain; it reads SLSEKNKAAV…VALALADRYR (142 aa). His-59 contributes to the O2 binding site. His-88 lines the heme b pocket.

It belongs to the globin family. Heterotetramer of two alpha chains and two beta chains. In terms of tissue distribution, red blood cells.

Its function is as follows. Involved in oxygen transport from gills to the various peripheral tissues. The protein is Hemoglobin subunit alpha (hba) of Pagothenia borchgrevinki (Bald rockcod).